The primary structure comprises 273 residues: FALAHMVNDLEMVDEFVGKGANGLEIDVTFSSAGQPEYTYHGVPCDCFRNCKRREDFDTYIKYIRHLATPGDPKFRSNLIMLIFDLKLNGLSQDALRSAGKEMADKLVGNYWQDLAEARAYIVLSMPSIEQADFVTAFKDELKDFGYDKNLDRIGYDFSGNEDLGETAKVYEKLNIHEHIWQADGITNCLPRGDSRLKEAISKRDTPGYQYINKVYTWTIDKSGSIANALRLGVDGVMTNYPERVIDALNDSEFSGKLRLATYEDNPWETFKG.

Residue H5 is part of the active site. Mg(2+)-binding residues include E25 and D27. H41 functions as the Nucleophile in the catalytic mechanism. 2 disulfides stabilise this stretch: C45–C51 and C47–C189. D85 is a Mg(2+) binding site. N250 carries N-linked (GlcNAc...) asparagine glycosylation.

It belongs to the arthropod phospholipase D family. Class II subfamily. Mg(2+) is required as a cofactor. As to expression, expressed by the venom gland.

It localises to the secreted. The enzyme catalyses an N-(acyl)-sphingosylphosphocholine = an N-(acyl)-sphingosyl-1,3-cyclic phosphate + choline. It carries out the reaction an N-(acyl)-sphingosylphosphoethanolamine = an N-(acyl)-sphingosyl-1,3-cyclic phosphate + ethanolamine. The catalysed reaction is a 1-acyl-sn-glycero-3-phosphocholine = a 1-acyl-sn-glycero-2,3-cyclic phosphate + choline. It catalyses the reaction a 1-acyl-sn-glycero-3-phosphoethanolamine = a 1-acyl-sn-glycero-2,3-cyclic phosphate + ethanolamine. Functionally, dermonecrotic toxins cleave the phosphodiester linkage between the phosphate and headgroup of certain phospholipids (sphingolipid and lysolipid substrates), forming an alcohol (often choline) and a cyclic phosphate. This toxin acts on sphingomyelin (SM). It may also act on ceramide phosphoethanolamine (CPE), lysophosphatidylcholine (LPC) and lysophosphatidylethanolamine (LPE), but not on lysophosphatidylserine (LPS), and lysophosphatidylglycerol (LPG). It acts by transphosphatidylation, releasing exclusively cyclic phosphate products as second products. Induces dermonecrosis, hemolysis, increased vascular permeability, edema, inflammatory response, and platelet aggregation. This chain is Dermonecrotic toxin LafSicTox-betaIE1, found in Loxosceles aff. spinulosa (strain GJB-2008) (Recluse spider).